The primary structure comprises 325 residues: Solute-binding protein Bpro_4736 (325 aa).

The signal sequence occupies residues 1–27 (MKTRTLKVLKPTLALLLAASFSAGALA). 168 to 173 (RISPVY) lines the phenylglyoxylate pocket.

This sequence belongs to the bacterial solute-binding protein 7 family. In terms of assembly, the complex is comprised of an extracytoplasmic solute-binding protein and a heteromeric permease formed by two transmembrane proteins.

The protein localises to the periplasm. Its function is as follows. Solute-binding protein that binds phenylglyoxylate (in vitro). Probably part of a tripartite ATP-independent periplasmic (TRAP) transport system that mediates solute transport into the cytoplasm. The polypeptide is Solute-binding protein Bpro_4736 (Polaromonas sp. (strain JS666 / ATCC BAA-500)).